The primary structure comprises 498 residues: GTPase Der (498 aa).

EngA-type G domains lie at 3-166 and 212-385; these read PVVA…FEEL and IKFA…RSAT. GTP-binding positions include 9–16, 56–60, 118–121, 218–225, 265–269, and 330–333; these read GRPNVGKS, DTGGI, NKTD, DTAGV, and NKWD. The KH-like domain maps to 386-470; sequence KRISTSMLTR…PIHIEFQEGD (85 aa).

It belongs to the TRAFAC class TrmE-Era-EngA-EngB-Septin-like GTPase superfamily. EngA (Der) GTPase family. Associates with the 50S ribosomal subunit.

In terms of biological role, GTPase that plays an essential role in the late steps of ribosome biogenesis. In Tolumonas auensis (strain DSM 9187 / NBRC 110442 / TA 4), this protein is GTPase Der.